The primary structure comprises 1390 residues: DNA-directed RNA polymerase subunit beta' (1390 aa).

Residues C70, C72, C85, and C88 each coordinate Zn(2+). The Mg(2+) site is built by D460, D462, and D464. C814, C888, C895, and C898 together coordinate Zn(2+).

It belongs to the RNA polymerase beta' chain family. The RNAP catalytic core consists of 2 alpha, 1 beta, 1 beta' and 1 omega subunit. When a sigma factor is associated with the core the holoenzyme is formed, which can initiate transcription. Mg(2+) serves as cofactor. Requires Zn(2+) as cofactor.

The catalysed reaction is RNA(n) + a ribonucleoside 5'-triphosphate = RNA(n+1) + diphosphate. Its function is as follows. DNA-dependent RNA polymerase catalyzes the transcription of DNA into RNA using the four ribonucleoside triphosphates as substrates. The polypeptide is DNA-directed RNA polymerase subunit beta' (Pseudoalteromonas translucida (strain TAC 125)).